The sequence spans 187 residues: Large ribosomal subunit protein bL25 (187 aa).

Belongs to the bacterial ribosomal protein bL25 family. CTC subfamily. As to quaternary structure, part of the 50S ribosomal subunit; part of the 5S rRNA/L5/L18/L25 subcomplex. Contacts the 5S rRNA. Binds to the 5S rRNA independently of L5 and L18.

Functionally, this is one of the proteins that binds to the 5S RNA in the ribosome where it forms part of the central protuberance. The sequence is that of Large ribosomal subunit protein bL25 from Tropheryma whipplei (strain Twist) (Whipple's bacillus).